A 707-amino-acid chain; its full sequence is Lipase maturation factor 2 (707 aa).

The next 9 helical transmembrane spans lie at 11–31, 78–98, 102–122, 126–146, 220–240, 256–276, 306–326, 358–378, and 398–418; these read FLWG…AQIP, MEMI…FSFL, LVFL…QVFL, WDSL…VHAL, FSVV…FLPF, ILII…VLCC, LYSL…FWTV, ITFP…LKGM, and VIFS…YTYI. The N-linked (GlcNAc...) asparagine glycan is linked to Asn483. A helical membrane pass occupies residues 634-654; sequence LLLHSFIFGIFTIYFLQAMFG. Residues 659–707 form a disordered region; the sequence is PGVAKQRHSKPPNEKKKQKSNSGQGESAAAKSSGHGADTVRRNKKNEKS. Over residues 696–707 the composition is skewed to basic and acidic residues; sequence DTVRRNKKNEKS.

The protein belongs to the lipase maturation factor family.

Its subcellular location is the endoplasmic reticulum membrane. Functionally, involved in the maturation of specific proteins in the endoplasmic reticulum. This chain is Lipase maturation factor 2 (lmf2), found in Xenopus tropicalis (Western clawed frog).